The primary structure comprises 88 residues: MASIVPLKEKKLMEVKLRELPSWILMRDFTPSGIAGAFRRGYDRYYNKYINVRKGSISGINMVLAAYVVFSYCISYKELKHERRRKYH.

At alanine 2 the chain carries N-acetylalanine. Position 3 is a phosphoserine (serine 3). Lysine 16 carries the N6-acetyllysine modification. A helical membrane pass occupies residues 62-79; it reads MVLAAYVVFSYCISYKEL.

The protein belongs to the ATPase F chain family. As to quaternary structure, component of the ATP synthase complex composed at least of ATP5F1A/subunit alpha, ATP5F1B/subunit beta, ATP5MC1/subunit c (homooctomer), MT-ATP6/subunit a, MT-ATP8/subunit 8, ATP5ME/subunit e, ATP5MF/subunit f, ATP5MG/subunit g, ATP5MK/subunit k, ATP5MJ/subunit j, ATP5F1C/subunit gamma, ATP5F1D/subunit delta, ATP5F1E/subunit epsilon, ATP5PF/subunit F6, ATP5PB/subunit b, ATP5PD/subunit d, ATP5PO/subunit OSCP. ATP synthase complex consists of a soluble F(1) head domain (subunits alpha(3) and beta(3)) - the catalytic core - and a membrane F(0) domain - the membrane proton channel (subunits c, a, 8, e, f, g, k and j). These two domains are linked by a central stalk (subunits gamma, delta, and epsilon) rotating inside the F1 region and a stationary peripheral stalk (subunits F6, b, d, and OSCP).

The protein localises to the mitochondrion. The protein resides in the mitochondrion inner membrane. Its function is as follows. Subunit f, of the mitochondrial membrane ATP synthase complex (F(1)F(0) ATP synthase or Complex V) that produces ATP from ADP in the presence of a proton gradient across the membrane which is generated by electron transport complexes of the respiratory chain. ATP synthase complex consist of a soluble F(1) head domain - the catalytic core - and a membrane F(1) domain - the membrane proton channel. These two domains are linked by a central stalk rotating inside the F(1) region and a stationary peripheral stalk. During catalysis, ATP synthesis in the catalytic domain of F(1) is coupled via a rotary mechanism of the central stalk subunits to proton translocation. In vivo, can only synthesize ATP although its ATP hydrolase activity can be activated artificially in vitro. Part of the complex F(0) domain. This is ATP synthase F(0) complex subunit f, mitochondrial from Rattus norvegicus (Rat).